Reading from the N-terminus, the 643-residue chain is Melanoma-associated antigen C3 (643 aa).

2 MAGE domains span residues 184 to 384 (LDEK…AAGM) and 456 to 643 (LDEK…FCPE). Residues 347–421 (NPQGLAGHRQ…PQSPLDSCSS (75 aa)) form a disordered region. Residues 354 to 363 (HRQEDGRRGL) are compositionally biased toward basic and acidic residues. Residues 383 to 414 (GMPPLPQSPPEIPPQGPPKISPQGPPQSPPQS) show a composition bias toward pro residues. 3 positions are modified to phosphothreonine: Thr478, Thr484, and Thr485.

As to expression, expressed in testis. Not expressed in other normal tissues, but is expressed in tumors of different histological origins.

In Homo sapiens (Human), this protein is Melanoma-associated antigen C3 (MAGEC3).